Consider the following 124-residue polypeptide: MEIIPFGSADLDNILAREPQRAEYLPFGAVLLDRTGTILKYNRAEGGIANRNPADVIGKNFFNEIAPCAKGKRFHGEFLRFHQTGQVNVMFDYKFAYKGANVGVKIHMKSQPDGQSCWLFVKRV.

One can recognise a PAS domain in the interval 22–85; the sequence is AEYLPFGAVL…GEFLRFHQTG (64 aa). Residue cysteine 68 is modified to S-(4-hydroxycinnamyl)cysteine.

It belongs to the photoactive yellow protein family. Post-translationally, the 4-hydroxycinnamic acid (p-coumaric acid) chromophore is covalently bound via a thioester linkage.

In terms of biological role, this photoactive protein is a photoreceptor with kinetics similar to that of rhodopsin. This is Photoactive yellow protein (pyp) from Cereibacter sphaeroides (strain ATCC 17023 / DSM 158 / JCM 6121 / CCUG 31486 / LMG 2827 / NBRC 12203 / NCIMB 8253 / ATH 2.4.1.) (Rhodobacter sphaeroides).